Reading from the N-terminus, the 287-residue chain is Uricase (287 aa).

Residues Lys11 and Thr58 each act as charge relay system in the active site. The urate site is built by Thr58, Asp59, Phe160, Arg177, Val219, Gln220, and Asn246. His248 acts as the Charge relay system in catalysis. Positions 285 to 287 match the Microbody targeting signal motif; that stretch reads SRL.

This sequence belongs to the uricase family.

Its subcellular location is the peroxisome. It carries out the reaction urate + O2 + H2O = 5-hydroxyisourate + H2O2. It functions in the pathway purine metabolism; urate degradation; (S)-allantoin from urate: step 1/3. In terms of biological role, catalyzes the oxidation of uric acid to 5-hydroxyisourate, which is further processed to form (S)-allantoin. The protein is Uricase (uox) of Dictyostelium discoideum (Social amoeba).